The sequence spans 280 residues: MLEITLLGTGSPIPDPDRAGPSTLVRAGAQAFLVDCGRGVLQRAAAVGVGAAGLSAVLLTHLHSDHIAELGDVLITSWVTNFAADPAPLPIIGPPGTAEVVEATLKAFGHDIGYRIAHHADLTTPPPIEVHEYTAGPAWDRDGVTIRVAPTDHRPVTPTIGFRIESDGASVVLAGDTVPCDSLDQLAAGADALVHTVIRKDIVTQIPQQRVKDICDYHSSVREAAATANRAGVGTLVMTHYVPAIGPGQEEQWRALAATEFSGRIEVGNDLHRVEVHPRR.

Zn(2+)-binding residues include His-61, His-63, Asp-65, His-66, His-153, Asp-176, and His-240. The active-site Proton acceptor is Asp-65.

This sequence belongs to the RNase Z family. Homodimer. Zn(2+) serves as cofactor.

It catalyses the reaction Endonucleolytic cleavage of RNA, removing extra 3' nucleotides from tRNA precursor, generating 3' termini of tRNAs. A 3'-hydroxy group is left at the tRNA terminus and a 5'-phosphoryl group is left at the trailer molecule.. Zinc phosphodiesterase, which displays some tRNA 3'-processing endonuclease activity. Probably involved in tRNA maturation, by removing a 3'-trailer from precursor tRNA. The sequence is that of Ribonuclease Z from Mycobacterium bovis (strain BCG / Pasteur 1173P2).